Reading from the N-terminus, the 198-residue chain is Chromophore lyase CpcS/CpeS 2 (198 aa).

Belongs to the CpcS/CpeS biliprotein lyase family.

It localises to the plastid. Its subcellular location is the organellar chromatophore. Covalently attaches a chromophore to Cys residue(s) of phycobiliproteins. The protein is Chromophore lyase CpcS/CpeS 2 of Paulinella chromatophora.